Reading from the N-terminus, the 209-residue chain is tRNA (guanine-N(7)-)-methyltransferase (209 aa).

Residues Asp35, Glu60, Asn87, and Asp113 each contribute to the S-adenosyl-L-methionine site. Residue Asp113 is part of the active site. The substrate site is built by Lys117 and Asp149.

This sequence belongs to the class I-like SAM-binding methyltransferase superfamily. TrmB family.

The enzyme catalyses guanosine(46) in tRNA + S-adenosyl-L-methionine = N(7)-methylguanosine(46) in tRNA + S-adenosyl-L-homocysteine. The protein operates within tRNA modification; N(7)-methylguanine-tRNA biosynthesis. Functionally, catalyzes the formation of N(7)-methylguanine at position 46 (m7G46) in tRNA. This chain is tRNA (guanine-N(7)-)-methyltransferase, found in Prochlorococcus marinus (strain MIT 9515).